Consider the following 217-residue polypeptide: 3,4-dihydroxy-2-butanone 4-phosphate synthase (217 aa).

D-ribulose 5-phosphate contacts are provided by residues 37 to 38 (RE), D42, 150 to 154 (RRGHT), and E174. Residue E38 coordinates Mg(2+). H153 serves as a coordination point for Mg(2+).

This sequence belongs to the DHBP synthase family. In terms of assembly, homodimer. Requires Mg(2+) as cofactor. The cofactor is Mn(2+).

The enzyme catalyses D-ribulose 5-phosphate = (2S)-2-hydroxy-3-oxobutyl phosphate + formate + H(+). Its pathway is cofactor biosynthesis; riboflavin biosynthesis; 2-hydroxy-3-oxobutyl phosphate from D-ribulose 5-phosphate: step 1/1. Catalyzes the conversion of D-ribulose 5-phosphate to formate and 3,4-dihydroxy-2-butanone 4-phosphate. The chain is 3,4-dihydroxy-2-butanone 4-phosphate synthase from Serratia proteamaculans (strain 568).